Reading from the N-terminus, the 524-residue chain is Rho guanine nucleotide exchange factor 3 (524 aa).

The interval 75 to 98 (SDSRPDLFSPRPWSRNTPAANTKR) is disordered. In terms of domain architecture, DH spans 121–303 (IKRQEAIFEL…IQGIVAEINI (183 aa)). One can recognise a PH domain in the interval 290–448 (AINIIQGIVA…QWLNCIRQAK (159 aa)).

It is found in the cytoplasm. In terms of biological role, acts as a guanine nucleotide exchange factor (GEF) for RhoA and RhoB GTPases. This is Rho guanine nucleotide exchange factor 3 (Arhgef3) from Gallus gallus (Chicken).